The primary structure comprises 324 residues: Beta-ketoacyl-[acyl-carrier-protein] synthase III (324 aa).

Residues C112 and H251 contribute to the active site. The segment at 252-256 (QANIR) is ACP-binding. Residue N281 is part of the active site.

The protein belongs to the thiolase-like superfamily. FabH family. Homodimer.

Its subcellular location is the cytoplasm. The enzyme catalyses malonyl-[ACP] + acetyl-CoA + H(+) = 3-oxobutanoyl-[ACP] + CO2 + CoA. Its pathway is lipid metabolism; fatty acid biosynthesis. Catalyzes the condensation reaction of fatty acid synthesis by the addition to an acyl acceptor of two carbons from malonyl-ACP. Catalyzes the first condensation reaction which initiates fatty acid synthesis and may therefore play a role in governing the total rate of fatty acid production. Possesses both acetoacetyl-ACP synthase and acetyl transacylase activities. Its substrate specificity determines the biosynthesis of branched-chain and/or straight-chain of fatty acids. This Desulfotalea psychrophila (strain LSv54 / DSM 12343) protein is Beta-ketoacyl-[acyl-carrier-protein] synthase III.